Reading from the N-terminus, the 511-residue chain is ADP,ATP carrier protein 4 (511 aa).

12 helical membrane-spanning segments follow: residues 34-54 (VSKFLFITLLMFCILFIQNLI), 71-91 (ISFLKFWGVMPSAFLMTAIYV), 102-122 (IFYLIISIFLAFFALFAYVIF), 157-177 (FSLFYIIAELWPNVVFALLFW), 192-212 (FYPLFGLLSQTGIYLAGQFLE), 231-251 (FHTLSIQIILTIVLILGIIAI), 296-316 (LIATLLICYGIAINLVEGPWK), 330-350 (AAFIGSYLSYTGVFTILFVVL), 361-381 (FTAAVITPLIVFITGILFFAV), 390-410 (LIIANFILTDPALIAITIGAI), 453-473 (LGKSGSAFLQSLVFIILPSAS), and 476-496 (SISICLMIIFIITCLTWLWAT).

The protein belongs to the ADP/ATP translocase tlc family.

The protein resides in the cell membrane. Provides the rickettsial cell with host ATP in exchange for rickettsial ADP. This is an obligate exchange system. This energy acquiring activity is an important component of rickettsial parasitism. In Rickettsia felis (strain ATCC VR-1525 / URRWXCal2) (Rickettsia azadi), this protein is ADP,ATP carrier protein 4 (tlcD).